The sequence spans 246 residues: Myogenic factor 5 (246 aa).

Residues 1–38 are disordered; it reads RVRARIPGLSSPEGEFPEDFEPRELPPFGAPAPTEPAC. Positions 73-124 constitute a bHLH domain; that stretch reads DRRKAATMRERRRLKKVNQAFETLKRCTTANPNQRLPKVEILRNAIRYIESL. The tract at residues 210–246 is disordered; the sequence is EEPGLPLRHAGSLSPGASIDSGARTPGSPPPRTYQAL. Residues 236-246 are compositionally biased toward pro residues; sequence GSPPPRTYQAL.

As to quaternary structure, efficient DNA binding requires dimerization with another bHLH protein.

The protein resides in the nucleus. Its function is as follows. Acts as a transcriptional activator that promotes transcription of muscle-specific target genes and plays a role in muscle differentiation. Induces fibroblasts to differentiate into myoblasts. Probable sequence specific DNA-binding protein. The chain is Myogenic factor 5 (MYF5) from Coturnix japonica (Japanese quail).